Here is a 245-residue protein sequence, read N- to C-terminus: tRNA1(Val) (adenine(37)-N6)-methyltransferase (245 aa).

Belongs to the methyltransferase superfamily. tRNA (adenine-N(6)-)-methyltransferase family.

It is found in the cytoplasm. It carries out the reaction adenosine(37) in tRNA1(Val) + S-adenosyl-L-methionine = N(6)-methyladenosine(37) in tRNA1(Val) + S-adenosyl-L-homocysteine + H(+). Specifically methylates the adenine in position 37 of tRNA(1)(Val) (anticodon cmo5UAC). The polypeptide is tRNA1(Val) (adenine(37)-N6)-methyltransferase (Salmonella arizonae (strain ATCC BAA-731 / CDC346-86 / RSK2980)).